The following is a 554-amino-acid chain: Propanediol dehydratase large subunit (554 aa).

Belongs to the diol/glycerol dehydratase large subunit family. The propanediol dehydratase enzyme is a heterotrimeric complex composed of a large (PduC), a medium (PduD) and a small (PduE) subunit. Requires adenosylcob(III)alamin as cofactor.

Its subcellular location is the bacterial microcompartment. It carries out the reaction propane-1,2-diol = propanal + H2O. It functions in the pathway polyol metabolism; 1,2-propanediol degradation. With respect to regulation, inhibited by glycerol. In terms of biological role, part of the PduCDE complex that catalyzes the dehydration of 1,2-propanediol (1,2-PD) to propionaldehyde. Required for S.typhimurium growth on 1,2-PD as the sole carbon and energy source. This subunit is directly targeted to the BMC. The 1,2-PD-specific bacterial microcompartment (BMC) concentrates low levels of 1,2-PD catabolic enzymes, concentrates volatile reaction intermediates thus enhancing pathway flux and keeps the level of toxic, mutagenic propionaldehyde low. In Salmonella typhimurium (strain LT2 / SGSC1412 / ATCC 700720), this protein is Propanediol dehydratase large subunit.